The following is a 256-amino-acid chain: Small ribosomal subunit protein uS2 (256 aa).

The protein belongs to the universal ribosomal protein uS2 family.

In Rhizobium rhizogenes (strain K84 / ATCC BAA-868) (Agrobacterium radiobacter), this protein is Small ribosomal subunit protein uS2.